Consider the following 563-residue polypeptide: Arginine--tRNA ligase (563 aa).

Residues 121–131 carry the 'HIGH' region motif; it reads PNIAKPFSIGH.

This sequence belongs to the class-I aminoacyl-tRNA synthetase family. Monomer.

The protein localises to the cytoplasm. The catalysed reaction is tRNA(Arg) + L-arginine + ATP = L-arginyl-tRNA(Arg) + AMP + diphosphate. In Streptococcus pyogenes serotype M3 (strain ATCC BAA-595 / MGAS315), this protein is Arginine--tRNA ligase.